The following is a 170-amino-acid chain: ATP synthase subunit b (170 aa).

The helical transmembrane segment at 15–37 (LNLFETNVLNWAVVVFGLYKFLP) threads the bilayer.

Belongs to the ATPase B chain family. As to quaternary structure, F-type ATPases have 2 components, F(1) - the catalytic core - and F(0) - the membrane proton channel. F(1) has five subunits: alpha(3), beta(3), gamma(1), delta(1), epsilon(1). F(0) has four main subunits: a(1), b(1), b'(1) and c(10-14). The alpha and beta chains form an alternating ring which encloses part of the gamma chain. F(1) is attached to F(0) by a central stalk formed by the gamma and epsilon chains, while a peripheral stalk is formed by the delta, b and b' chains.

The protein localises to the cellular thylakoid membrane. In terms of biological role, f(1)F(0) ATP synthase produces ATP from ADP in the presence of a proton or sodium gradient. F-type ATPases consist of two structural domains, F(1) containing the extramembraneous catalytic core and F(0) containing the membrane proton channel, linked together by a central stalk and a peripheral stalk. During catalysis, ATP synthesis in the catalytic domain of F(1) is coupled via a rotary mechanism of the central stalk subunits to proton translocation. Functionally, component of the F(0) channel, it forms part of the peripheral stalk, linking F(1) to F(0). In Prochlorococcus marinus (strain MIT 9515), this protein is ATP synthase subunit b.